The primary structure comprises 194 residues: 7-methyl-GTP pyrophosphatase (194 aa).

The active-site Proton acceptor is Asp-69.

It belongs to the Maf family. YceF subfamily. Requires a divalent metal cation as cofactor.

Its subcellular location is the cytoplasm. The catalysed reaction is N(7)-methyl-GTP + H2O = N(7)-methyl-GMP + diphosphate + H(+). Nucleoside triphosphate pyrophosphatase that hydrolyzes 7-methyl-GTP (m(7)GTP). May have a dual role in cell division arrest and in preventing the incorporation of modified nucleotides into cellular nucleic acids. This chain is 7-methyl-GTP pyrophosphatase, found in Sodalis glossinidius (strain morsitans).